A 1355-amino-acid polypeptide reads, in one-letter code: Patatin-like phospholipase domain-containing protein 6 (1355 aa).

Topologically, residues 1 to 43 are lumenal; sequence MGTPSHELNTTSSGAEVIQKTLEEGLGRRICVAQPVPFVPQVL. An N-linked (GlcNAc...) asparagine glycan is attached at asparagine 9. Residues 44–64 traverse the membrane as a helical segment; that stretch reads GVMIGAGVAVLVTAVLILLVV. Residues 65 to 1355 are Cytoplasmic-facing; that stretch reads RRLRVQKTPA…QETPSSVADA (1291 aa). 179–306 is an a nucleoside 3',5'-cyclic phosphate binding site; the sequence is VLGHFEKPLF…VRVVQIIMVR (128 aa). Phosphoserine is present on serine 338. The segment at 338–395 is disordered; sequence SPGLPTRTSPVRGSKRVVSTSGTEDTSKETSGRPLDSIGAPLPGPAGDPVKPTSLEAP. Residues 343–361 show a composition bias toward polar residues; sequence TRTSPVRGSKRVVSTSGTE. The residue at position 345 (threonine 345) is a Phosphothreonine. A phosphoserine mark is found at serine 346, serine 356, and serine 405. Residues 492–614 and 610–730 contribute to the a nucleoside 3',5'-cyclic phosphate site; these read ELAK…VAAR and TVAA…LSQK. In terms of domain architecture, PNPLA spans 961-1127; the sequence is LVLGGGGARG…INNLPADIAR (167 aa). A GXGXXG motif is present at residues 965–970; it reads GGGARG. The GXSXG signature appears at 992–996; it reads GTSIG. The Nucleophile role is filled by serine 994. Aspartate 1114 (proton acceptor) is an active-site residue. The short motif at 1114–1116 is the DGA/G element; that stretch reads DGG. A disordered region spans residues 1286 to 1355; the sequence is SYVSDGCADG…QETPSSVADA (70 aa). Residues 1293–1309 show a composition bias toward acidic residues; that stretch reads ADGEESDCLTEYEEDAG.

It belongs to the NTE family. In terms of processing, glycosylated. In terms of tissue distribution, expressed in brain, testes and kidney (at protein level). Expressed ubiquitously in brain of young mice. Reaching adulthood, there is a most prominent expression in Purkinje cells, granule cells and pyramidal neurons of the hippocampus and some large neurons in the medulla oblongata, nucleus dentatus and pons.

The protein localises to the endoplasmic reticulum membrane. The enzyme catalyses a 1-acyl-sn-glycero-3-phosphocholine + H2O = sn-glycerol 3-phosphocholine + a fatty acid + H(+). It carries out the reaction 1-hexadecanoyl-sn-glycero-3-phosphocholine + H2O = sn-glycerol 3-phosphocholine + hexadecanoate + H(+). The catalysed reaction is 1-hexadecanoyl-sn-glycero-3-phosphate + H2O = sn-glycerol 3-phosphate + hexadecanoate + H(+). It catalyses the reaction 1-(9Z-octadecenoyl)-sn-glycero-3-phosphocholine + H2O = sn-glycerol 3-phosphocholine + (9Z)-octadecenoate + H(+). The enzyme catalyses 1-hexadecanoylglycerol + H2O = glycerol + hexadecanoate + H(+). It carries out the reaction 2-hexadecanoylglycerol + H2O = glycerol + hexadecanoate + H(+). The catalysed reaction is 1-(9Z-octadecenoyl)-glycerol + H2O = glycerol + (9Z)-octadecenoate + H(+). It catalyses the reaction 2-(9Z-octadecenoyl)-glycerol + H2O = glycerol + (9Z)-octadecenoate + H(+). The enzyme catalyses 2-(5Z,8Z,11Z,14Z-eicosatetraenoyl)-glycerol + H2O = glycerol + (5Z,8Z,11Z,14Z)-eicosatetraenoate + H(+). Inhibited by a series a OPs such as mipafox (MPX), phenyl saligenin phosphate (PSP), phenyl dipentyl phosphinate (PDPP), diisopropyl fluorophosphate and paraoxon. In terms of biological role, phospholipase B that deacylates intracellular phosphatidylcholine (PtdCho), generating glycerophosphocholine (GroPtdCho). This deacylation occurs at both sn-2 and sn-1 positions of PtdCho. Catalyzes the hydrolysis of several naturally occurring membrane-associated lipids. Hydrolyzes lysophospholipids and monoacylglycerols, preferring the 1-acyl to the 2-acyl isomer. Does not catalyze hydrolysis of di- or triacylglycerols or fatty acid amides. The protein is Patatin-like phospholipase domain-containing protein 6 (Pnpla6) of Mus musculus (Mouse).